The chain runs to 194 residues: Ion-translocating oxidoreductase complex subunit A (194 aa).

The next 6 helical transmembrane spans lie at 4–24, 39–59, 71–91, 102–122, 135–155, and 172–192; these read LALILVSAILVNNFVLVQFLG, IGLSLATTFVLTLAAICSYIL, FLRTIGFILVIAVVVQFTEML, VLGIFLPLITTNCIVLGVALL, TTQGFGAGLGFSLVLVLFAAL, and AIGMITAGLMSLAFMGFSGLI.

This sequence belongs to the NqrDE/RnfAE family. As to quaternary structure, the complex is composed of six subunits: RnfA, RnfB, RnfC, RnfD, RnfE and RnfG.

It localises to the cell inner membrane. Functionally, part of a membrane-bound complex that couples electron transfer with translocation of ions across the membrane. The sequence is that of Ion-translocating oxidoreductase complex subunit A from Pseudomonas paraeruginosa (strain DSM 24068 / PA7) (Pseudomonas aeruginosa (strain PA7)).